The sequence spans 320 residues: Cytochrome f (320 aa).

Residues 1–35 (MRNINTYDWMKKWMTRSISILVMIHMITRTSISNA) form the signal peptide. Heme is bound by residues Y36, C56, C59, and H60. Residues 286-306 (VQGLLLLLASVILAQIFLVLK) traverse the membrane as a helical segment.

Belongs to the cytochrome f family. In terms of assembly, the 4 large subunits of the cytochrome b6-f complex are cytochrome b6, subunit IV (17 kDa polypeptide, petD), cytochrome f and the Rieske protein, while the 4 small subunits are PetG, PetL, PetM and PetN. The complex functions as a dimer. It depends on heme as a cofactor.

The protein resides in the plastid. The protein localises to the chloroplast thylakoid membrane. In terms of biological role, component of the cytochrome b6-f complex, which mediates electron transfer between photosystem II (PSII) and photosystem I (PSI), cyclic electron flow around PSI, and state transitions. The chain is Cytochrome f from Cycas taitungensis (Prince sago).